Reading from the N-terminus, the 491-residue chain is E3 ubiquitin-protein ligase Hakai (491 aa).

Disordered stretches follow at residues 1 to 20 (MDHT…LGGL) and 33 to 61 (KQAS…GDEE). Residues 109–149 (CDKCGLPIKVYGRMIPCKHVFCYDCAILHEKKGDKMCPGCS) form an RING-type zinc finger. The interval 148–206 (CSDPVQRIEQCTRGSLFMCSIVQGCKRTYLSQRDLQAHINHRHMRAGKPVTRASLENVH) is HYB domain. The segment at 164 to 190 (FMCSIVQGCKRTYLSQRDLQAHINHRH) adopts a C2H2-type zinc-finger fold. Phosphoserine occurs at positions 201, 285, and 290. The interval 255-491 (QPHEDIRAPP…DQTRYRPYYQ (237 aa)) is disordered. 3 stretches are compositionally biased toward pro residues: residues 342–359 (APPP…PHPP), 372–389 (APPP…PPPG), and 399–423 (MNHP…PPHH). A compositionally biased stretch (polar residues) spans 427–442 (NSLPQFTEDQGTLSPP). Pro residues predominate over residues 457–478 (PRGPPPPPRMQGPPSQTPLPGP).

The protein belongs to the Hakai family. Homodimer. Interacts with tyrosine-phosphorylated SRC substrates. Component of the WMM complex, a N6-methyltransferase complex composed of a catalytic subcomplex, named MAC, and of an associated subcomplex, named MACOM. The MAC subcomplex is composed of METTL3 and METTL14. The MACOM subcomplex is composed of WTAP, ZC3H13, CBLL1/HAKAI, VIRMA, and, in some cases of RBM15 (RBM15 or RBM15B). Also a component of a MACOM-like complex, named WTAP complex, composed of WTAP, ZC3H13, CBLL1, VIRMA, RBM15, BCLAF1 and THRAP3. Post-translationally, phosphorylated on tyrosine residues. In terms of tissue distribution, detected in heart, brain, spleen, lung, liver, skeletal muscle, kidney and testis.

It is found in the nucleus speckle. The protein resides in the nucleus. Its subcellular location is the nucleoplasm. It localises to the cytoplasm. The catalysed reaction is S-ubiquitinyl-[E2 ubiquitin-conjugating enzyme]-L-cysteine + [acceptor protein]-L-lysine = [E2 ubiquitin-conjugating enzyme]-L-cysteine + N(6)-ubiquitinyl-[acceptor protein]-L-lysine.. It participates in protein modification; protein ubiquitination. Functionally, E3 ubiquitin-protein ligase that mediates ubiquitination of several tyrosine-phosphorylated Src substrates, including CDH1, CTTN and DOK1. Targets CDH1 for endocytosis and degradation. Associated component of the WMM complex, a complex that mediates N6-methyladenosine (m6A) methylation of RNAs, a modification that plays a role in the efficiency of mRNA splicing and RNA processing. Its function in the WMM complex is unknown. The chain is E3 ubiquitin-protein ligase Hakai from Mus musculus (Mouse).